The following is a 202-amino-acid chain: UPF0637 protein Exig_2520 (202 aa).

It belongs to the UPF0637 family.

In Exiguobacterium sibiricum (strain DSM 17290 / CCUG 55495 / CIP 109462 / JCM 13490 / 255-15), this protein is UPF0637 protein Exig_2520.